We begin with the raw amino-acid sequence, 383 residues long: Chromatin structure-remodeling complex subunit SFH1 (383 aa).

A disordered region spans residues 61–80; it reads DDDEKVHSDNGKGEGEEVGH. Residues 64 to 80 are compositionally biased toward basic and acidic residues; the sequence is EKVHSDNGKGEGEEVGH.

Belongs to the SNF5 family.

The protein resides in the nucleus. Functionally, part of the chromatin structure-remodeling complex (RSC) which is involved in transcription regulation and nucleosome positioning. RSC is responsible for the transfer of a histone octamer from a nucleosome core particle to naked DNA. The reaction requires ATP and involves an activated RSC-nucleosome intermediate. Remodeling reaction also involves DNA translocation, DNA twist and conformational change. As a reconfigurer of centromeric and flanking nucleosomes, RSC complex is required both for proper kinetochore function in chromosome segregation and, via a PKC1-dependent signaling pathway, for organization of the cellular cytoskeleton. This subunit is essential for mitotic growth and required for cell cycle progression. This is Chromatin structure-remodeling complex subunit SFH1 (SFH1) from Eremothecium gossypii (strain ATCC 10895 / CBS 109.51 / FGSC 9923 / NRRL Y-1056) (Yeast).